The primary structure comprises 233 residues: Probable GTP-binding protein EngB (233 aa).

The region spanning 23 to 209 (AVPEVAFAGR…QRIVAGWLCL (187 aa)) is the EngB-type G domain. Residues 31–38 (GRSNAGKS), 58–62 (GRTQH), 82–85 (DLPG), 149–152 (TKAD), and 188–190 (FSS) each bind GTP. 2 residues coordinate Mg(2+): S38 and T60.

It belongs to the TRAFAC class TrmE-Era-EngA-EngB-Septin-like GTPase superfamily. EngB GTPase family. It depends on Mg(2+) as a cofactor.

Functionally, necessary for normal cell division and for the maintenance of normal septation. This is Probable GTP-binding protein EngB from Ralstonia pickettii (strain 12J).